A 342-amino-acid chain; its full sequence is Heat-inducible transcription repressor HrcA (342 aa).

The protein belongs to the HrcA family.

Negative regulator of class I heat shock genes (grpE-dnaK-dnaJ and groELS operons). Prevents heat-shock induction of these operons. The sequence is that of Heat-inducible transcription repressor HrcA from Onion yellows phytoplasma (strain OY-M).